The primary structure comprises 310 residues: Putative HTH-type transcriptional regulatory protein M1425_1284 (310 aa).

The 56-residue stretch at 125 to 180 folds into the HTH cro/C1-type domain; that stretch reads LKHKREEMGYSIGDVAKFLGVSRKAIYDYEKGDSDVSLEVAEKLIDLFGDDIIGDV. The H-T-H motif DNA-binding region spans 136–155; the sequence is IGDVAKFLGVSRKAIYDYEK.

The protein is Putative HTH-type transcriptional regulatory protein M1425_1284 of Saccharolobus islandicus (strain M.14.25 / Kamchatka #1) (Sulfolobus islandicus).